The primary structure comprises 1141 residues: MDDSGELGGLETMETLTELGDELTLGDIDEMLQFVSNQVGEFPDLFSEQLCSSFPGSGGSGSSSGSSGSSSSSSNGRGSSSGAVDPSVQRSFTQVTLPSFSPSAASPQAPTLQVKVSPTSVPTTPRATPILQPRPQPQPQPQTQLQQQTVMITPTFSTTPQTRIIQQPLIYQNAATSFQVLQPQVQSLVTSSQVQPVTIQQQVQTVQAQRVLTQTANGTLQTLAPATVQTVAAPQVQQVPVLVQPQIIKTDSLVLTTLKTDGSPVMAAVQNPALTALTTPIQTAALQVPTLVGSSGTILTTMPVMMGQEKVPIKQVPGGVKQLEPPKEGERRTTHNIIEKRYRSSINDKIIELKDLVMGTDAKMHKSGVLRKAIDYIKYLQQVNHKLRQENMVLKLANQKNKLLKGIDLGSLVDNEVDLKIEDFNQNVLLMSPPASDSGSQAGFSPYSIDSEPGSPLLDDAKVKDEPDSPPVALGMVDRSRILLCVLTFLCLSFNPLTSLLQWGGAHDSDQHPHSGSGRSVLSFESGSGGWFDWMMPTLLLWLVNGVIVLSVFVKLLVHGEPVIRPHSRSSVTFWRHRKQADLDLARGDFAAAAGNLQTCLAVLGRALPTSRLDLACSLSWNVIRYSLQKLRLVRWLLKKVFQCRRATPATEAGFEDEAKTSARDAALAYHRLHQLHITGKLPAGSACSDVHMALCAVNLAECAEEKIPPSTLVEIHLTAAMGLKTRCGGKLGFLASYFLSRAQSLCGPEHSAVPDSLRWLCHPLGQKFFMERSWSVKSAAKESLYCAQRNPADPIAQVHQAFCKNLLERAIESLVKPQAKKKAGDQEEESCEFSSALEYLKLLHSFVDSVGVMSPPLSRSSVLKSALGPDIICRWWTSAITVAISWLQGDDAAVRSHFTKVERIPKALEVTESPLVKAIFHACRAMHASLPGKADGQQSSFCHCERASGHLWSSLNVSGATSDPALNHVVQLLTCDLLLSLRTALWQKQASASQAVGETYHASGAELAGFQRDLGSLRRLAHSFRPAYRKVFLHEATVRLMAGASPTRTHQLLEHSLRRRTTQSTKHGEVDAWPGQRERATAILLACRHLPLSFLSSPGQRAVLLAEAARTLEKVGDRRSCNDCQQMIVKLGGGTAIAAS.

The transcriptional activation (acidic) stretch occupies residues 1–50 (MDDSGELGGLETMETLTELGDELTLGDIDEMLQFVSNQVGEFPDLFSEQL). Over 1-479 (MDDSGELGGL…PPVALGMVDR (479 aa)) the chain is Cytoplasmic. The disordered stretch occupies residues 48 to 144 (EQLCSSFPGS…PQPQPQPQTQ (97 aa)). The segment covering 63–82 (SSGSSGSSSSSSNGRGSSSG) has biased composition (low complexity). The segment covering 88 to 97 (VQRSFTQVTL) has biased composition (polar residues). Residues 98 to 110 (PSFSPSAASPQAP) are compositionally biased toward low complexity. The span at 114 to 126 (VKVSPTSVPTTPR) shows a compositional bias: polar residues. Residues 237–491 (QQVPVLVQPQ…ILLCVLTFLC (255 aa)) are interaction with LMNA. One can recognise a bHLH domain in the interval 330–380 (ERRTTHNIIEKRYRSSINDKIIELKDLVMGTDAKMHKSGVLRKAIDYIKYL). A leucine-zipper region spans residues 380-401 (LQQVNHKLRQENMVLKLANQKN). Lys464 participates in a covalent cross-link: Glycyl lysine isopeptide (Lys-Gly) (interchain with G-Cter in SUMO2). The chain crosses the membrane as a helical span at residues 480 to 500 (SRILLCVLTFLCLSFNPLTSL). Residues 501-533 (LQWGGAHDSDQHPHSGSGRSVLSFESGSGGWFD) are Lumenal-facing. The helical transmembrane segment at 534 to 554 (WMMPTLLLWLVNGVIVLSVFV) threads the bilayer. Topologically, residues 555 to 1139 (KLLVHGEPVI…VKLGGGTAIA (585 aa)) are cytoplasmic. Phosphoserine occurs at positions 855 and 1098.

It belongs to the SREBP family. As to quaternary structure, forms a tight complex with SCAP, the SCAP-SREBP complex, in the endoplasmic reticulum membrane and the Golgi apparatus. Interacts with PAQR3; the interaction anchors the SCAP-SREBP complex to the Golgi apparatus in low cholesterol conditions. Interacts (via C-terminal domain) with RNF139. In terms of assembly, homodimer; efficient DNA binding of the soluble transcription factor fragment requires dimerization with another bHLH protein. Interacts with LMNA. Post-translationally, processed in the Golgi apparatus, releasing the protein from the membrane. At low cholesterol the SCAP-SREBP complex is recruited into COPII vesicles for export from the endoplasmic reticulum. In the Golgi, complex SREBPs are cleaved sequentially by site-1 (MBTPS1, S1P) and site-2 (MBTPS2, S2P) protease. The first cleavage by site-1 protease occurs within the luminal loop, the second cleavage by site-2 protease occurs within the first transmembrane domain, releasing the transcription factor from the Golgi membrane. Apoptosis triggers cleavage by the cysteine proteases caspase-3 and caspase-7. Cleavage and activation is induced by mediated cholesterol efflux. Phosphorylated by AMPK, leading to suppress protein processing and nuclear translocation, and repress target gene expression. In terms of processing, SCAP-free SREBF2 is ubiquitinated by the BCR(ARMC5) complex, leading to its degradation. Post-translationally, ubiquitinated; the nuclear form has a rapid turnover and is rapidly ubiquitinated and degraded by the proteasome in the nucleus. In terms of tissue distribution, ubiquitously expressed in adult and fetal tissues.

The protein localises to the endoplasmic reticulum membrane. The protein resides in the golgi apparatus membrane. It localises to the cytoplasmic vesicle. It is found in the COPII-coated vesicle membrane. Its subcellular location is the nucleus. Activation by cleavage is down-regulated upon activation of SIRT3-dependent PRKAA1/AMPK-alpha signaling cascade which leads to inhibition of ATP-consuming lipogenesis to restore cellular energy balance. In terms of biological role, precursor of the transcription factor form (Processed sterol regulatory element-binding protein 2), which is embedded in the endoplasmic reticulum membrane. Low sterol concentrations promote processing of this form, releasing the transcription factor form that translocates into the nucleus and activates transcription of genes involved in cholesterol biosynthesis. Key transcription factor that regulates expression of genes involved in cholesterol biosynthesis. Binds to the sterol regulatory element 1 (SRE-1) (5'-ATCACCCCAC-3'). Has dual sequence specificity binding to both an E-box motif (5'-ATCACGTGA-3') and to SRE-1 (5'-ATCACCCCAC-3'). Regulates transcription of genes related to cholesterol synthesis pathway. In Homo sapiens (Human), this protein is Sterol regulatory element-binding protein 2.